Reading from the N-terminus, the 917-residue chain is Smoothelin (917 aa).

Ala-2 bears the N-acetylalanine mark. Residues 24–89 adopt a coiled-coil conformation; that stretch reads LAERRRIRSA…ARLAGQLESM (66 aa). Residues 157-456 form a disordered region; the sequence is EVPEREEQEQ…AVGTAEPGGS (300 aa). The span at 177-188 shows a compositional bias: polar residues; it reads PEGTSQDVTTVT. Low complexity-rich tracts occupy residues 193–210 and 220–232; these read APPG…SSPT and PAEA…EVPG. The segment covering 233 to 243 has biased composition (pro residues); that stretch reads SPEPPPSPPKT. The span at 244–258 shows a compositional bias: low complexity; it reads TSPEPQESPTLPSTE. Positions 298-326 are enriched in polar residues; that stretch reads RSLSVLSPRQPAQNRESTPLASGPSSFQR. Phosphoserine occurs at positions 299, 301, and 304. Positions 329-338 are enriched in basic and acidic residues; the sequence is SVRDRVHKFT. The residue at position 341 (Ser-341) is a Phosphoserine. Thr-351 bears the Phosphothreonine mark. Ser-357 bears the Phosphoserine mark. Residues Thr-360 and Thr-373 each carry the phosphothreonine modification. The segment covering 363-392 has biased composition (low complexity); that stretch reads RLLGPSLTSTTPASSSSGSSSRGPSDTSSR. Ser-503, Ser-514, Ser-523, and Ser-576 each carry phosphoserine. 2 disordered regions span residues 560–580 and 617–767; these read ANGA…PLSA and QRKR…RKAM. Residues 603–630 are a coiled coil; sequence EERKLIRAALRELRQRKRDQRDKERERR. Residues 617 to 640 show a composition bias toward basic and acidic residues; that stretch reads QRKRDQRDKERERRLQEARGRPGE. Polar residues predominate over residues 676–689; the sequence is NDGTRTARTTTVES. The span at 701–720 shows a compositional bias: low complexity; that stretch reads STMMQTKTFSSSSSSKKMGS. Residue Ser-729 is modified to Phosphoserine. Basic and acidic residues predominate over residues 738-750; that stretch reads LEKRQAEKKKELM. At Ser-792 the chain carries Phosphoserine. The Calponin-homology (CH) domain occupies 799–906; it reads NSIKQMLLDW…YVQSLYNHLR (108 aa).

This sequence belongs to the smoothelin family. Smooth muscle; contractile or vascular (for the long form).

It is found in the cytoplasm. Its subcellular location is the cytoskeleton. Functionally, structural protein of the cytoskeleton. This chain is Smoothelin (SMTN), found in Homo sapiens (Human).